Reading from the N-terminus, the 599-residue chain is Elongation factor 4 (599 aa).

Residues 5–187 form the tr-type G domain; sequence SHIRNFSIIA…RLVTAIPAPE (183 aa). GTP is bound by residues 17 to 22 and 134 to 137; these read DHGKST and NKMD.

Belongs to the TRAFAC class translation factor GTPase superfamily. Classic translation factor GTPase family. LepA subfamily.

The protein resides in the cell inner membrane. The catalysed reaction is GTP + H2O = GDP + phosphate + H(+). Functionally, required for accurate and efficient protein synthesis under certain stress conditions. May act as a fidelity factor of the translation reaction, by catalyzing a one-codon backward translocation of tRNAs on improperly translocated ribosomes. Back-translocation proceeds from a post-translocation (POST) complex to a pre-translocation (PRE) complex, thus giving elongation factor G a second chance to translocate the tRNAs correctly. Binds to ribosomes in a GTP-dependent manner. This Pseudomonas aeruginosa (strain LESB58) protein is Elongation factor 4.